The following is a 131-amino-acid chain: Large ribosomal subunit protein bL17 (131 aa).

Belongs to the bacterial ribosomal protein bL17 family. In terms of assembly, part of the 50S ribosomal subunit. Contacts protein L32.

The chain is Large ribosomal subunit protein bL17 from Nitrosospira multiformis (strain ATCC 25196 / NCIMB 11849 / C 71).